The following is a 496-amino-acid chain: Probable cytosol aminopeptidase (496 aa).

Residues Lys266 and Asp271 each contribute to the Mn(2+) site. Lys278 is an active-site residue. Mn(2+) is bound by residues Asp289, Asp348, and Glu350. Arg352 is a catalytic residue.

It belongs to the peptidase M17 family. Requires Mn(2+) as cofactor.

It is found in the cytoplasm. It catalyses the reaction Release of an N-terminal amino acid, Xaa-|-Yaa-, in which Xaa is preferably Leu, but may be other amino acids including Pro although not Arg or Lys, and Yaa may be Pro. Amino acid amides and methyl esters are also readily hydrolyzed, but rates on arylamides are exceedingly low.. It carries out the reaction Release of an N-terminal amino acid, preferentially leucine, but not glutamic or aspartic acids.. Its function is as follows. Presumably involved in the processing and regular turnover of intracellular proteins. Catalyzes the removal of unsubstituted N-terminal amino acids from various peptides. The sequence is that of Probable cytosol aminopeptidase from Pseudomonas fluorescens (strain Pf0-1).